The following is a 1670-amino-acid chain: DNA-directed RNA polymerase I subunit 1 (1670 aa).

The Zn(2+) site is built by Cys-79, Cys-82, Cys-89, His-92, Cys-119, and Cys-122. The disordered stretch occupies residues 154–185 (ESNTPTKSKSSDESCESVVTTDSSEECEDSDV). Over residues 176–185 (SSEECEDSDV) the composition is skewed to acidic residues. Cys-213 and Cys-216 together coordinate Zn(2+). The tract at residues 255–293 (TSSVENPDGFDDSGIDALSEVEDGDKETREKSTEVAAEF) is disordered. Residues 262–279 (DGFDDSGIDALSEVEDGD) are compositionally biased toward acidic residues. Basic and acidic residues predominate over residues 280–293 (KETREKSTEVAAEF). Residues Asp-602, Asp-604, and Asp-606 each contribute to the Mg(2+) site. The tract at residues 1005 to 1017 (PQEYYFHCMAGRE) is bridging helix. The tract at residues 1318 to 1437 (TGPIAGNETD…EQSKKKRRKF (120 aa)) is disordered. Acidic residues-rich tracts occupy residues 1339–1354 (DDGDDDGEGTEVDDLG), 1366–1379 (DEMDYEENSEDETN), and 1388–1399 (EDPEMDSENEDT). Over residues 1415–1429 (EPQKEVKGVKNVKEQ) the composition is skewed to basic and acidic residues.

This sequence belongs to the RNA polymerase beta' chain family. In terms of assembly, component of the RNA polymerase I (Pol I) complex consisting of at least 13 subunits.

It localises to the nucleus. The enzyme catalyses RNA(n) + a ribonucleoside 5'-triphosphate = RNA(n+1) + diphosphate. Functionally, DNA-dependent RNA polymerase catalyzes the transcription of DNA into RNA using the four ribonucleoside triphosphates as substrates. Largest and catalytic core component of RNA polymerase I which synthesizes ribosomal RNA precursors. Forms the polymerase active center together with the second largest subunit. A single stranded DNA template strand of the promoter is positioned within the central active site cleft of Pol I. A bridging helix emanates from NRPA1 and crosses the cleft near the catalytic site and is thought to promote translocation of Pol I by acting as a ratchet that moves the RNA-DNA hybrid through the active site by switching from straight to bent conformations at each step of nucleotide addition. The polypeptide is DNA-directed RNA polymerase I subunit 1 (Arabidopsis thaliana (Mouse-ear cress)).